The sequence spans 112 residues: Large ribosomal subunit protein eL30z (112 aa).

It belongs to the eukaryotic ribosomal protein eL30 family.

In Arabidopsis thaliana (Mouse-ear cress), this protein is Large ribosomal subunit protein eL30z (RPL30A).